A 469-amino-acid polypeptide reads, in one-letter code: Zinc finger and BTB domain-containing protein 8A.1-B (469 aa).

Residues 24–92 (CDCHIIVEGQ…VYSGKLPLSG (69 aa)) enclose the BTB domain. 2 consecutive C2H2-type zinc fingers follow at residues 315-337 (FKCP…LRCH) and 343-366 (YPCE…QTIH).

The protein resides in the nucleus. Functionally, may be involved in transcriptional regulation. The chain is Zinc finger and BTB domain-containing protein 8A.1-B (zbtb8a.1-b) from Xenopus laevis (African clawed frog).